Consider the following 165-residue polypeptide: Protein SprT (165 aa).

Residues 20 to 163 (EKLAQANLKL…RCVHCGEQLV (144 aa)) form the SprT-like domain. His-78 lines the Zn(2+) pocket. Glu-79 is a catalytic residue. Residue His-82 coordinates Zn(2+).

This sequence belongs to the SprT family. Requires Zn(2+) as cofactor.

Its subcellular location is the cytoplasm. The sequence is that of Protein SprT from Escherichia coli (strain K12 / MC4100 / BW2952).